The following is a 437-amino-acid chain: UPF0597 protein Shal_0864 (437 aa).

Belongs to the UPF0597 family.

This chain is UPF0597 protein Shal_0864, found in Shewanella halifaxensis (strain HAW-EB4).